Reading from the N-terminus, the 152-residue chain is Transcriptional regulator MraZ (152 aa).

SpoVT-AbrB domains are found at residues 5–52 (ATTL…PLPE) and 81–124 (ADDC…NEDA).

It belongs to the MraZ family. As to quaternary structure, forms oligomers.

It is found in the cytoplasm. Its subcellular location is the nucleoid. This chain is Transcriptional regulator MraZ, found in Idiomarina loihiensis (strain ATCC BAA-735 / DSM 15497 / L2-TR).